Here is a 201-residue protein sequence, read N- to C-terminus: ATP-dependent Clp protease proteolytic subunit (201 aa).

S100 serves as the catalytic Nucleophile. The active site involves H125.

It belongs to the peptidase S14 family. As to quaternary structure, component of the chloroplastic Clp protease core complex.

The protein localises to the plastid. It is found in the chloroplast stroma. It carries out the reaction Hydrolysis of proteins to small peptides in the presence of ATP and magnesium. alpha-casein is the usual test substrate. In the absence of ATP, only oligopeptides shorter than five residues are hydrolyzed (such as succinyl-Leu-Tyr-|-NHMec, and Leu-Tyr-Leu-|-Tyr-Trp, in which cleavage of the -Tyr-|-Leu- and -Tyr-|-Trp bonds also occurs).. In terms of biological role, cleaves peptides in various proteins in a process that requires ATP hydrolysis. Has a chymotrypsin-like activity. Plays a major role in the degradation of misfolded proteins. In Chloranthus spicatus (Chulantree), this protein is ATP-dependent Clp protease proteolytic subunit.